We begin with the raw amino-acid sequence, 65 residues long: Large ribosomal subunit protein bL35 (65 aa).

Residues 23-44 (KRMKAGKQHILTKKSQKTKRNL) are disordered.

This sequence belongs to the bacterial ribosomal protein bL35 family.

The chain is Large ribosomal subunit protein bL35 from Lachnoclostridium phytofermentans (strain ATCC 700394 / DSM 18823 / ISDg) (Clostridium phytofermentans).